The sequence spans 130 residues: Gonadotropin subunit beta-1 (130 aa).

The first 18 residues, 1–18 (MRMRFVVMVILLPALMMS), serve as a signal peptide directing secretion. Cystine bridges form between Cys26/Cys74, Cys40/Cys89, Cys51/Cys105, Cys55/Cys107, and Cys110/Cys117. The N-linked (GlcNAc...) asparagine glycan is linked to Asn30.

It belongs to the glycoprotein hormones subunit beta family. Heterodimer of an alpha and a beta chain.

It is found in the secreted. Involved in gametogenesis and steroidogenesis. This chain is Gonadotropin subunit beta-1 (cgba), found in Carassius auratus (Goldfish).